Here is a 416-residue protein sequence, read N- to C-terminus: MTVDLREEKELAQQRFKEICKHAKIVDTHNDFPYLLRVQLRNKLQLAEFDFENGLTSHTDLVKMRQGQVGVQFFSCFIECKNPNYLYQDFDTPTTVVRDTLEQIDVTRRLVCKYNNDLKFVDCADDAIAAFRNNGKIAIALGVEGLHQVDTSLAVLRQYYSLGVRYITLTHNCDNPFATAASSITGGLPDRGLSAYGIECIFEMNRLGMMVDLSHVSHRTMHDALDVTKAPVIFSHSSAYTLTEHERNVRDDVLERLKTNGGVVQVNFYQDFIRKPGSDRATIDDAADHILHIIKVAGWEHVGLGSDFDGIPQGPKGLEDVSKYPDLICKIIERTNATNEQIEGLMGLNVLRVWKKTELVALQLSKKLEPIESSWSGRKWEFYSYAKEFPELFPDAYKLNEKSTVWNYDQPLNIEK.

Residues His29, Asp31, Glu144, His215, and His236 each contribute to the Zn(2+) site.

It belongs to the metallo-dependent hydrolases superfamily. Peptidase M19 family. It depends on Zn(2+) as a cofactor.

The catalysed reaction is an L-aminoacyl-L-amino acid + H2O = 2 an L-alpha-amino acid. This is an uncharacterized protein from Schizosaccharomyces pombe (strain 972 / ATCC 24843) (Fission yeast).